The following is a 310-amino-acid chain: Mas-related G-protein coupled receptor member E (310 aa).

The Extracellular segment spans residues 1–22 (MTSLSVHTDSPSTQGEMAFNLT). A glycan (N-linked (GlcNAc...) asparagine) is linked at asparagine 20. A helical membrane pass occupies residues 23 to 43 (ILSLTELLSLGGLLGNGVALW). The Cytoplasmic portion of the chain corresponds to 44-60 (LLNQNVYRNPFSIYLLD). Residues 61 to 81 (VACADLIFLCCHMVAIIPELL) traverse the membrane as a helical segment. The Extracellular segment spans residues 82–92 (QDQLNFPEFVH). Residues 93–113 (ISLTMLRFFCYIVGLSLLAAI) traverse the membrane as a helical segment. The Cytoplasmic portion of the chain corresponds to 114 to 133 (STEQCLATLFPAWYLCRRPR). A helical transmembrane segment spans residues 134 to 154 (YLTTCVCALIWVLCLLLDLLL). The Extracellular portion of the chain corresponds to 155–174 (SGACTQFFGAPSYHLCDMLW). A helical membrane pass occupies residues 175–195 (LVVAVLLAALCCTMCVTSLLL). Residues 196-213 (LLRVERGPERHQPRGFPT) lie on the Cytoplasmic side of the membrane. A helical membrane pass occupies residues 214–234 (LVLLAVLLFLFCGLPFGIFWL). Residues 235–248 (SKNLSWHIPLYFYH) are Extracellular-facing. Asparagine 237 carries N-linked (GlcNAc...) asparagine glycosylation. The helical transmembrane segment at 249–269 (FSFFMASVHSAAKPAIYFFLG) threads the bilayer. The Cytoplasmic segment spans residues 270 to 310 (STPGQRFREPLRLVLQRALGDEAELGAGREASQGGLVDMTV).

The protein belongs to the G-protein coupled receptor 1 family. Mas subfamily.

It is found in the cell membrane. Orphan receptor. May regulate nociceptor function and/or development, including the sensation or modulation of pain. The sequence is that of Mas-related G-protein coupled receptor member E (Mrgpre) from Mus musculus (Mouse).